A 255-amino-acid polypeptide reads, in one-letter code: Phosphate import ATP-binding protein PstB (255 aa).

The region spanning 10 to 250 (INIKDLNLWY…PQMKSTEDYI (241 aa)) is the ABC transporter domain. 42–49 (GPSGCGKS) contributes to the ATP binding site.

Belongs to the ABC transporter superfamily. Phosphate importer (TC 3.A.1.7) family. As to quaternary structure, the complex is composed of two ATP-binding proteins (PstB), two transmembrane proteins (PstC and PstA) and a solute-binding protein (PstS).

Its subcellular location is the cell membrane. It carries out the reaction phosphate(out) + ATP + H2O = ADP + 2 phosphate(in) + H(+). In terms of biological role, part of the ABC transporter complex PstSACB involved in phosphate import. Responsible for energy coupling to the transport system. The protein is Phosphate import ATP-binding protein PstB of Methanococcoides burtonii (strain DSM 6242 / NBRC 107633 / OCM 468 / ACE-M).